Consider the following 533-residue polypeptide: Retinoic acid receptor RXR-beta (533 aa).

Residues 1–24 (MSWAARPPFLPQRHAAGQCGPVGV) form a disordered region. The segment at 1–204 (MSWAARPPFL…PGGPGAGKRL (204 aa)) is modulating. Position 25 is an omega-N-methylarginine (Arg25). Positions 37–183 (RRRRPWLDPA…GPPEDVKPPV (147 aa)) are disordered. The segment covering 46–61 (AAAAAAAAAAGEQQTP) has biased composition (low complexity). Over residues 67-82 (EAGRDGMGDSGRDSRS) the composition is skewed to basic and acidic residues. Low complexity predominate over residues 83 to 94 (PDSSSPNPLSQG). Pro residues-rich tracts occupy residues 95–109 (APPPSPPGLPLPPSS) and 118–129 (APPPPPMPPPQL). Over residues 130–143 (GSPFPVISSSMGSP) the composition is skewed to low complexity. The span at 144 to 153 (GLPPPAPPGF) shows a compositional bias: pro residues. 2 consecutive NR C4-type zinc fingers follow at residues 205-225 (CAICGDRSSGKHYGVYSCEGC) and 241-265 (CRDNKDCTVDKRQRNRCQYCRYQKC). Residues 205-270 (CAICGDRSSG…RYQKCLATGM (66 aa)) constitute a DNA-binding region (nuclear receptor). The hinge stretch occupies residues 271–295 (KREAVQEERQRGKDKDGDGEGAGGA). Residues 276–288 (QEERQRGKDKDGD) show a composition bias toward basic and acidic residues. Disordered stretches follow at residues 276-299 (QEERQRGKDKDGDGEGAGGAPEEM) and 313-336 (QKSDQGVEGPGGTGGSGSSPNDPV). The NR LBD domain maps to 296–529 (PEEMPVDRIL…TFLMEMLEAP (234 aa)). Gly residues predominate over residues 320–329 (EGPGGTGGSG).

It belongs to the nuclear hormone receptor family. NR2 subfamily. Homodimer (in vitro). Heterodimer with other retinoic acid receptor family members. Binds DNA preferentially as a RAR/RXR heterodimer. Interacts with NR1H3. Interacts with AKAP13.

The protein resides in the nucleus. The protein localises to the cytoplasm. In terms of biological role, receptor for retinoic acid. Retinoic acid receptors bind as heterodimers to their target response elements in response to their ligands, all-trans or 9-cis retinoic acid, and regulate gene expression in various biological processes. The RAR/RXR heterodimers bind to the retinoic acid response elements (RARE). This is Retinoic acid receptor RXR-beta (RXRB) from Canis lupus familiaris (Dog).